We begin with the raw amino-acid sequence, 249 residues long: Transmembrane protein 150C (249 aa).

Residues 1-9 (MDGKKCSVW) are Cytoplasmic-facing. Residues 10-30 (MFLPLVFTVFTSAGLWIVYFI) form a helical membrane-spanning segment. Residues 31 to 64 (AVEDDKIFPLNSAERKPGVKHAPYISIAGDEPPA) are Extracellular-facing. Residues 65–85 (SCVFSQVMNMAAFLALVVAVL) traverse the membrane as a helical segment. Topologically, residues 86-97 (RFIQLKPKVLNP) are cytoplasmic. A helical membrane pass occupies residues 98 to 118 (WLNISGLVALCLASFGMTLLG). At 119-130 (NFQLTNDEEIHN) the chain is on the extracellular side. The helical transmembrane segment at 131 to 151 (VGTSLTFGFGTLTCWIQAALT) threads the bilayer. The Cytoplasmic segment spans residues 152 to 168 (LKVNIKNEGRKVGIPRV). The helical transmembrane segment at 169–189 (ILSASITLCVVLYFILMAQGI) threads the bilayer. The Extracellular portion of the chain corresponds to 190-192 (HMY). Residues 193–213 (AARVQWGLVMCFLSYFGTFAV) form a helical membrane-spanning segment. At 214-249 (EFRHYRYEIVCSEYQENFLSFSESLSEASEYQTDQV) the chain is on the cytoplasmic side.

It belongs to the DRAM/TMEM150 family.

The protein localises to the cell membrane. It is found in the lysosome membrane. It catalyses the reaction Ca(2+)(in) = Ca(2+)(out). It carries out the reaction Na(+)(in) = Na(+)(out). The enzyme catalyses K(+)(in) = K(+)(out). The catalysed reaction is Mg(2+)(in) = Mg(2+)(out). Functionally, nonselective cationic channel with high permeability to Ca(2+). Component of a mechanosensitive cation channel. Confers mechanically activated (MA) currents with slow inactivation kinetics. May contribute to proprioception. The chain is Transmembrane protein 150C (TMEM150C) from Bos taurus (Bovine).